Consider the following 432-residue polypeptide: Alcohol acyltransferase 9 (432 aa).

Active-site proton acceptor residues include His-156 and Asp-379.

The protein belongs to the plant acyltransferase family. In terms of tissue distribution, expressed in fruit.

It carries out the reaction 2-(methylsulfanyl)acetyl-CoA + butan-1-ol = butyl 2-(methylsulfanyl)acetate + CoA. The enzyme catalyses ethanol + acetyl-CoA = ethyl acetate + CoA. It catalyses the reaction butan-1-ol + acetyl-CoA = butyl acetate + CoA. The catalysed reaction is butan-1-ol + propanoyl-CoA = butyl propanoate + CoA. In terms of biological role, involved in the biosynthesis of volatile esters which confer kiwifruit flavor. Alcohol acyl transferase that can use a wide range of alcohols as substrate to produce esters. Exhibits acetyl-CoA:alcohol O-acyltransferase activity. This Actinidia deliciosa (Kiwi) protein is Alcohol acyltransferase 9.